The sequence spans 123 residues: Small ribosomal subunit protein uS12 (123 aa).

Asp89 bears the 3-methylthioaspartic acid mark.

It belongs to the universal ribosomal protein uS12 family. Part of the 30S ribosomal subunit. Contacts proteins S8 and S17. May interact with IF1 in the 30S initiation complex.

Its function is as follows. With S4 and S5 plays an important role in translational accuracy. Interacts with and stabilizes bases of the 16S rRNA that are involved in tRNA selection in the A site and with the mRNA backbone. Located at the interface of the 30S and 50S subunits, it traverses the body of the 30S subunit contacting proteins on the other side and probably holding the rRNA structure together. The combined cluster of proteins S8, S12 and S17 appears to hold together the shoulder and platform of the 30S subunit. The protein is Small ribosomal subunit protein uS12 of Gluconacetobacter diazotrophicus (strain ATCC 49037 / DSM 5601 / CCUG 37298 / CIP 103539 / LMG 7603 / PAl5).